A 227-amino-acid chain; its full sequence is MAYPFQLGLQDATSPIMEELMNFHDHTLMIVFLISSLVLYIISLMLTTKLTHTSTMDAQEVETIWTILPAAILILIALPSLRILYMMDEINNPVLTVKTMGHQWYWSYEYTDYEDLCFDSYMIPTNELKPGELRLLEVDNRVVLPMELPIRMLISSEDVLHSWAVPSLGLKTDAIPGRLNQATVTSNRPGLFYGQCSEICGSNHSFMPIVLEMVPLKYFENWSASMI.

Residues 1 to 14 lie on the Mitochondrial intermembrane side of the membrane; the sequence is MAYPFQLGLQDATS. The chain crosses the membrane as a helical span at residues 15 to 45; it reads PIMEELMNFHDHTLMIVFLISSLVLYIISLM. The Mitochondrial matrix segment spans residues 46 to 59; it reads LTTKLTHTSTMDAQ. The chain crosses the membrane as a helical span at residues 60–87; that stretch reads EVETIWTILPAAILILIALPSLRILYMM. Over 88 to 227 the chain is Mitochondrial intermembrane; that stretch reads DEINNPVLTV…YFENWSASMI (140 aa). Cu cation contacts are provided by His-161, Cys-196, Glu-198, Cys-200, His-204, and Met-207. Glu-198 is a binding site for Mg(2+).

Belongs to the cytochrome c oxidase subunit 2 family. As to quaternary structure, component of the cytochrome c oxidase (complex IV, CIV), a multisubunit enzyme composed of 14 subunits. The complex is composed of a catalytic core of 3 subunits MT-CO1, MT-CO2 and MT-CO3, encoded in the mitochondrial DNA, and 11 supernumerary subunits COX4I, COX5A, COX5B, COX6A, COX6B, COX6C, COX7A, COX7B, COX7C, COX8 and NDUFA4, which are encoded in the nuclear genome. The complex exists as a monomer or a dimer and forms supercomplexes (SCs) in the inner mitochondrial membrane with NADH-ubiquinone oxidoreductase (complex I, CI) and ubiquinol-cytochrome c oxidoreductase (cytochrome b-c1 complex, complex III, CIII), resulting in different assemblies (supercomplex SCI(1)III(2)IV(1) and megacomplex MCI(2)III(2)IV(2)). Found in a complex with TMEM177, COA6, COX18, COX20, SCO1 and SCO2. Interacts with TMEM177 in a COX20-dependent manner. Interacts with COX20. Interacts with COX16. The cofactor is Cu cation.

It is found in the mitochondrion inner membrane. It catalyses the reaction 4 Fe(II)-[cytochrome c] + O2 + 8 H(+)(in) = 4 Fe(III)-[cytochrome c] + 2 H2O + 4 H(+)(out). Its function is as follows. Component of the cytochrome c oxidase, the last enzyme in the mitochondrial electron transport chain which drives oxidative phosphorylation. The respiratory chain contains 3 multisubunit complexes succinate dehydrogenase (complex II, CII), ubiquinol-cytochrome c oxidoreductase (cytochrome b-c1 complex, complex III, CIII) and cytochrome c oxidase (complex IV, CIV), that cooperate to transfer electrons derived from NADH and succinate to molecular oxygen, creating an electrochemical gradient over the inner membrane that drives transmembrane transport and the ATP synthase. Cytochrome c oxidase is the component of the respiratory chain that catalyzes the reduction of oxygen to water. Electrons originating from reduced cytochrome c in the intermembrane space (IMS) are transferred via the dinuclear copper A center (CU(A)) of subunit 2 and heme A of subunit 1 to the active site in subunit 1, a binuclear center (BNC) formed by heme A3 and copper B (CU(B)). The BNC reduces molecular oxygen to 2 water molecules using 4 electrons from cytochrome c in the IMS and 4 protons from the mitochondrial matrix. The polypeptide is Cytochrome c oxidase subunit 2 (MT-CO2) (Leggadina forresti (Forrest's mouse)).